The sequence spans 986 residues: Probable serine/threonine-protein kinase DDB_G0272092 (986 aa).

One can recognise a C2 domain in the interval 1-107 (MARKIGSVRI…EYIVDTTKWY (107 aa)). Ca(2+) contacts are provided by Asp-22, Asp-28, Asp-76, Asp-78, Ser-81, and Asp-84. ANK repeat units follow at residues 137 to 167 (PEKSPFIKAIKDNDTQAIELMMNKAKLDYTI), 171 to 201 (EGTPAIHIAAASNNIPLITMLLKGSDARVSI), 205 to 238 (HGNTPLHLFVQKNVSLNCEDIINKLIERGCGIND), 242 to 274 (LGETALHKACLATVVQKTTIVEQLLQKGAIINH), 278 to 307 (TRDTPLHYAIKVGKVEFVRFFLQNGANVMI), and 312 to 344 (PSRTPLELAKELGNPQIISKVEKVIEISDWLNE). Residues 333–396 (EKVIEISDWL…LRAVRKIKDP (64 aa)) enclose the SAM domain. Positions 412-438 (HVENDNNNNNNNNNNNNNSQEQCNINN) are enriched in low complexity. Disordered stretches follow at residues 412–520 (HVEN…SNTT) and 532–574 (TTLT…PEGP). The segment covering 439 to 448 (DSLGSGNRNS) has biased composition (polar residues). Over residues 454–464 (QNQNNTLNNNN) the composition is skewed to low complexity. Positions 465 to 476 (VESKSTGNLNSL) are enriched in polar residues. 2 stretches are compositionally biased toward low complexity: residues 493–520 (NILSPNPIPASSSAPAAPSPVAIGSNTT) and 546–571 (TESTTPPQQQQQTTTITPTKTTTVTP). The 270-residue stretch at 601–870 (LTYNVLLGTG…ELLKIRDEYN (270 aa)) folds into the Protein kinase domain. ATP is bound by residues 607-615 (LGTGASGKV) and Lys-628. Asp-722 serves as the catalytic Proton acceptor. Composition is skewed to low complexity over residues 901–913 (DSNNINNNNNNNN) and 928–947 (SNSNLLNNNNNNNNNDSDNN). Positions 901-986 (DSNNINNNNN…SPMEPKSIKK (86 aa)) are disordered. Polar residues-rich tracts occupy residues 948–959 (ISEPATTDSITK) and 969–978 (LTRTRSSSSP).

Belongs to the protein kinase superfamily. TKL Ser/Thr protein kinase family. Requires Ca(2+) as cofactor.

The enzyme catalyses L-seryl-[protein] + ATP = O-phospho-L-seryl-[protein] + ADP + H(+). It catalyses the reaction L-threonyl-[protein] + ATP = O-phospho-L-threonyl-[protein] + ADP + H(+). The polypeptide is Probable serine/threonine-protein kinase DDB_G0272092 (Dictyostelium discoideum (Social amoeba)).